We begin with the raw amino-acid sequence, 166 residues long: Regulator of ribonuclease activity A (166 aa).

It belongs to the RraA family. As to quaternary structure, homotrimer. Binds to both RNA-binding sites in the C-terminal region of Rne and to RhlB.

The protein resides in the cytoplasm. Globally modulates RNA abundance by binding to RNase E (Rne) and regulating its endonucleolytic activity. Can modulate Rne action in a substrate-dependent manner by altering the composition of the degradosome. Modulates RNA-binding and helicase activities of the degradosome. The sequence is that of Regulator of ribonuclease activity A from Glaesserella parasuis serovar 5 (strain SH0165) (Haemophilus parasuis).